The chain runs to 526 residues: 2-succinyl-5-enolpyruvyl-6-hydroxy-3-cyclohexene-1-carboxylate synthase (526 aa).

The protein belongs to the TPP enzyme family. MenD subfamily. In terms of assembly, homodimer. Mg(2+) is required as a cofactor. Requires Mn(2+) as cofactor. Thiamine diphosphate serves as cofactor.

It carries out the reaction isochorismate + 2-oxoglutarate + H(+) = 5-enolpyruvoyl-6-hydroxy-2-succinyl-cyclohex-3-ene-1-carboxylate + CO2. Its pathway is quinol/quinone metabolism; 1,4-dihydroxy-2-naphthoate biosynthesis; 1,4-dihydroxy-2-naphthoate from chorismate: step 2/7. It functions in the pathway quinol/quinone metabolism; menaquinone biosynthesis. Its function is as follows. Catalyzes the thiamine diphosphate-dependent decarboxylation of 2-oxoglutarate and the subsequent addition of the resulting succinic semialdehyde-thiamine pyrophosphate anion to isochorismate to yield 2-succinyl-5-enolpyruvyl-6-hydroxy-3-cyclohexene-1-carboxylate (SEPHCHC). This Bdellovibrio bacteriovorus (strain ATCC 15356 / DSM 50701 / NCIMB 9529 / HD100) protein is 2-succinyl-5-enolpyruvyl-6-hydroxy-3-cyclohexene-1-carboxylate synthase.